The chain runs to 605 residues: MSIPIRADQLRSRYLAFFSQKAHVVISGKSLVPEHDPTVLFTTAGMHPLVPYLMGEPHPAGTRLVNAQKCLRTGDIDAVGDNSHLTFFEMLGNWSLGDYFKEEAIAFSFEFLTGAPWLGISPDRLSVTVFAGDEAVARDEESAAIWERLGIARTHIHFLPRADNWWGPTGETGPCGPDTEIFFDTGVPPCSVSCRPGCSCGKYVEIWNDVFMQYRKDADGRYRPLERYCVDTGMGIERTVAVLQGKRSVYDTEIFTPLLERIGQLCGKRYGCQGAHDVSMRIVCDHIRAATFILGDPVPVRPSNVGAGYVLRRIIRRSVRHGRKLGIDGEFLSSLARVVIGQYAAVYPELEEKATCIAQELANEERKFLDALRKGEAEYERMIPKFLQGTEREIPGSVAFRLYDTYGFPLELTEELARESGLRVDRAGFDTAFQAHQACSRIGAQRVFKGGLADHSAETTAYHTATHLLHQALRVVLGTHVQQKGSNITAERLRFDFSHPRPMSAQEKVQVEQLVNEQIRADLPVCCEVMSLEDAMNSGAVALFGEKYESTVKVYSIGTFSREVCGGPHVARTGQLGRFSIQKEQSSAAGVRRIRAILEKSGEKS.

Zn(2+)-binding residues include histidine 463, histidine 467, cysteine 565, and histidine 569.

This sequence belongs to the class-II aminoacyl-tRNA synthetase family. Requires Zn(2+) as cofactor.

It localises to the cytoplasm. It carries out the reaction tRNA(Ala) + L-alanine + ATP = L-alanyl-tRNA(Ala) + AMP + diphosphate. Its function is as follows. Catalyzes the attachment of alanine to tRNA(Ala) in a two-step reaction: alanine is first activated by ATP to form Ala-AMP and then transferred to the acceptor end of tRNA(Ala). Also edits incorrectly charged Ser-tRNA(Ala) and Gly-tRNA(Ala) via its editing domain. This Treponema pallidum (strain Nichols) protein is Alanine--tRNA ligase (alaS).